A 789-amino-acid chain; its full sequence is Protein translocase subunit SecA 2 (789 aa).

ATP-binding positions include Q79, 97-101 (GEGKT), and D487.

The protein belongs to the SecA family. Monomer and homodimer. Part of the essential Sec protein translocation apparatus which comprises SecA, SecYEG and auxiliary proteins SecDF. Other proteins may also be involved.

The protein resides in the cell membrane. It localises to the cytoplasm. It carries out the reaction ATP + H2O + cellular proteinSide 1 = ADP + phosphate + cellular proteinSide 2.. Functionally, part of the Sec protein translocase complex. Interacts with the SecYEG preprotein conducting channel. Has a central role in coupling the hydrolysis of ATP to the transfer of proteins into and across the cell membrane, serving as an ATP-driven molecular motor driving the stepwise translocation of polypeptide chains across the membrane. This chain is Protein translocase subunit SecA 2, found in Pediococcus pentosaceus (strain ATCC 25745 / CCUG 21536 / LMG 10740 / 183-1w).